A 96-amino-acid polypeptide reads, in one-letter code: NADH-quinone oxidoreductase subunit K (96 aa).

The next 3 membrane-spanning stretches (helical) occupy residues 1 to 21, 25 to 45, and 56 to 76; these read MNYIVLAAIVFTIGAVGVLVR, IIVFMCVELMLNACNLAFVAF, and VIAFFVMVVAAAEVVVGLAII.

This sequence belongs to the complex I subunit 4L family. In terms of assembly, NDH-1 is composed of 14 different subunits. Subunits NuoA, H, J, K, L, M, N constitute the membrane sector of the complex.

Its subcellular location is the cell membrane. The catalysed reaction is a quinone + NADH + 5 H(+)(in) = a quinol + NAD(+) + 4 H(+)(out). Its function is as follows. NDH-1 shuttles electrons from NADH, via FMN and iron-sulfur (Fe-S) centers, to quinones in the respiratory chain. The immediate electron acceptor for the enzyme in this species is believed to be a menaquinone. Couples the redox reaction to proton translocation (for every two electrons transferred, four hydrogen ions are translocated across the cytoplasmic membrane), and thus conserves the redox energy in a proton gradient. The sequence is that of NADH-quinone oxidoreductase subunit K from Thermobifida fusca (strain YX).